Consider the following 74-residue polypeptide: Histone H1.C8/H1.M1 (74 aa).

Residues 1 to 74 form a disordered region; sequence MSDAAVPPKK…KAVKKAPKKK (74 aa). A compositionally biased stretch (basic residues) spans 11–74; that stretch reads ASPKKAAAKK…KAVKKAPKKK (64 aa).

The protein localises to the nucleus. It is found in the chromosome. This chain is Histone H1.C8/H1.M1, found in Trypanosoma cruzi.